Reading from the N-terminus, the 440-residue chain is Ribosomal protein uS12 methylthiotransferase RimO (440 aa).

The 117-residue stretch at 8–124 (TSVFLLSLGC…VLDALGARYH (117 aa)) folds into the MTTase N-terminal domain. [4Fe-4S] cluster is bound by residues C17, C53, C87, C148, C152, and C155. Residues 134 to 363 (LTPPHSSYLK…MELQEEIARK (230 aa)) enclose the Radical SAM core domain. The 72-residue stretch at 366–437 (EAFVGSLMTV…AYELHGTVES (72 aa)) folds into the TRAM domain.

This sequence belongs to the methylthiotransferase family. RimO subfamily. [4Fe-4S] cluster serves as cofactor.

The protein resides in the cytoplasm. It catalyses the reaction L-aspartate(89)-[ribosomal protein uS12]-hydrogen + (sulfur carrier)-SH + AH2 + 2 S-adenosyl-L-methionine = 3-methylsulfanyl-L-aspartate(89)-[ribosomal protein uS12]-hydrogen + (sulfur carrier)-H + 5'-deoxyadenosine + L-methionine + A + S-adenosyl-L-homocysteine + 2 H(+). Functionally, catalyzes the methylthiolation of an aspartic acid residue of ribosomal protein uS12. This chain is Ribosomal protein uS12 methylthiotransferase RimO, found in Chlorobium luteolum (strain DSM 273 / BCRC 81028 / 2530) (Pelodictyon luteolum).